Consider the following 650-residue polypeptide: Fructose-1,6-bisphosphatase class 3 (650 aa).

This sequence belongs to the FBPase class 3 family. Mn(2+) serves as cofactor.

It catalyses the reaction beta-D-fructose 1,6-bisphosphate + H2O = beta-D-fructose 6-phosphate + phosphate. Its pathway is carbohydrate biosynthesis; gluconeogenesis. This Finegoldia magna (strain ATCC 29328 / DSM 20472 / WAL 2508) (Peptostreptococcus magnus) protein is Fructose-1,6-bisphosphatase class 3.